The sequence spans 394 residues: Probable fimbrial assembly protein FimD, serogroup H1 (394 aa).

This is Probable fimbrial assembly protein FimD, serogroup H1 (fimD) from Dichelobacter nodosus (Bacteroides nodosus).